A 486-amino-acid chain; its full sequence is Ribulose bisphosphate carboxylase large chain (486 aa).

Residues asparagine 125 and threonine 175 each coordinate substrate. Catalysis depends on lysine 177, which acts as the Proton acceptor. Substrate is bound at residue lysine 179. The Mg(2+) site is built by lysine 203, aspartate 205, and glutamate 206. Position 203 is an N6-carboxylysine (lysine 203). The active-site Proton acceptor is histidine 295. Positions 296, 328, and 380 each coordinate substrate.

This sequence belongs to the RuBisCO large chain family. Type I subfamily. As to quaternary structure, heterohexadecamer of 8 large chains and 8 small chains. Mg(2+) is required as a cofactor.

It carries out the reaction 2 (2R)-3-phosphoglycerate + 2 H(+) = D-ribulose 1,5-bisphosphate + CO2 + H2O. It catalyses the reaction D-ribulose 1,5-bisphosphate + O2 = 2-phosphoglycolate + (2R)-3-phosphoglycerate + 2 H(+). RuBisCO catalyzes two reactions: the carboxylation of D-ribulose 1,5-bisphosphate, the primary event in carbon dioxide fixation, as well as the oxidative fragmentation of the pentose substrate. Both reactions occur simultaneously and in competition at the same active site. In Aurantimonas manganoxydans (strain ATCC BAA-1229 / DSM 21871 / SI85-9A1), this protein is Ribulose bisphosphate carboxylase large chain.